Here is a 331-residue protein sequence, read N- to C-terminus: Ketol-acid reductoisomerase (NADP(+)) (331 aa).

The region spanning 2-182 (AQLFYDSDAD…GGTRAGILET (181 aa)) is the KARI N-terminal Rossmann domain. NADP(+)-binding positions include 25–28 (YGSQ), Ser51, Ser53, and 83–86 (DEFQ). Residue His108 is part of the active site. Gly134 lines the NADP(+) pocket. Positions 183 to 328 (NFKEETETDL…KGLRSMFSWL (146 aa)) constitute a KARI C-terminal knotted domain. Mg(2+)-binding residues include Asp191, Glu195, Glu227, and Glu231. Position 252 (Ser252) interacts with substrate.

This sequence belongs to the ketol-acid reductoisomerase family. Requires Mg(2+) as cofactor.

It carries out the reaction (2R)-2,3-dihydroxy-3-methylbutanoate + NADP(+) = (2S)-2-acetolactate + NADPH + H(+). The enzyme catalyses (2R,3R)-2,3-dihydroxy-3-methylpentanoate + NADP(+) = (S)-2-ethyl-2-hydroxy-3-oxobutanoate + NADPH + H(+). It functions in the pathway amino-acid biosynthesis; L-isoleucine biosynthesis; L-isoleucine from 2-oxobutanoate: step 2/4. Its pathway is amino-acid biosynthesis; L-valine biosynthesis; L-valine from pyruvate: step 2/4. Its function is as follows. Involved in the biosynthesis of branched-chain amino acids (BCAA). Catalyzes an alkyl-migration followed by a ketol-acid reduction of (S)-2-acetolactate (S2AL) to yield (R)-2,3-dihydroxy-isovalerate. In the isomerase reaction, S2AL is rearranged via a Mg-dependent methyl migration to produce 3-hydroxy-3-methyl-2-ketobutyrate (HMKB). In the reductase reaction, this 2-ketoacid undergoes a metal-dependent reduction by NADPH to yield (R)-2,3-dihydroxy-isovalerate. The polypeptide is Ketol-acid reductoisomerase (NADP(+)) (Synechococcus sp. (strain CC9311)).